The sequence spans 122 residues: Large ribosomal subunit protein uL14 (122 aa).

This sequence belongs to the universal ribosomal protein uL14 family. Part of the 50S ribosomal subunit. Forms a cluster with proteins L3 and L19. In the 70S ribosome, L14 and L19 interact and together make contacts with the 16S rRNA in bridges B5 and B8.

Functionally, binds to 23S rRNA. Forms part of two intersubunit bridges in the 70S ribosome. The sequence is that of Large ribosomal subunit protein uL14 from Listeria monocytogenes serotype 4b (strain CLIP80459).